Reading from the N-terminus, the 321-residue chain is Mitochondrial thiamine pyrophosphate carrier 1 (321 aa).

The next 6 helical transmembrane spans lie at 12–28 (GTRR…GLVS), 91–107 (LMYV…YRTT), 126–146 (FVAG…LDLL), 184–200 (AAVG…FATY), 221–237 (AAGV…MFPL), and 284–301 (GLTV…VTMW). Solcar repeat units lie at residues 12 to 110 (GTRR…TTQA), 120 to 206 (PPSA…LRPP), and 214 to 309 (PFGS…SLRL).

This sequence belongs to the mitochondrial carrier (TC 2.A.29) family.

The protein resides in the mitochondrion inner membrane. Its function is as follows. Mitochondrial transporter that mediates uptake of thiamine pyrophosphate (ThPP) into mitochondria. The sequence is that of Mitochondrial thiamine pyrophosphate carrier 1 (tpc1) from Aspergillus niger (strain ATCC MYA-4892 / CBS 513.88 / FGSC A1513).